Consider the following 412-residue polypeptide: Stachydrine N-demethylase (412 aa).

The 106-residue stretch at Leu45–Ile150 folds into the Rieske domain. 4 residues coordinate [2Fe-2S] cluster: Cys86, His88, Cys106, and His109. Fe cation contacts are provided by His204, His209, and Asp360.

This sequence belongs to the bacterial ring-hydroxylating dioxygenase alpha subunit family. As to quaternary structure, homotrimer. The system is probably composed of an oxygenase subunit (Stc2) and two reductase subunits (Stc3 and Stc4). The cofactor is [2Fe-2S] cluster. It depends on Fe cation as a cofactor.

The enzyme catalyses L-proline betaine + NADH + O2 + H(+) = N-methyl-L-proline + formaldehyde + NAD(+) + H2O. It carries out the reaction L-proline betaine + NADPH + O2 + H(+) = N-methyl-L-proline + formaldehyde + NADP(+) + H2O. Its function is as follows. Monooxygenase involved in the catabolism of stachydrine (L-proline betaine), a source of carbon and nitrogen. Part of a Rieske-type oxygenase system that catalyzes the demethylation of stachydrine to produce N-methyl-L-proline (monomethylproline). Stc2 is the catalytic subunit. This is Stachydrine N-demethylase from Rhizobium meliloti (strain 1021) (Ensifer meliloti).